We begin with the raw amino-acid sequence, 178 residues long: Cytochrome b6-f complex iron-sulfur subunit (178 aa).

A helical membrane pass occupies residues 20 to 42 (LLTFGTATGVALGALYPVANYFM). The Rieske domain maps to 65–161 (KTGWLATHQA…VDIEDDAVLV (97 aa)). [2Fe-2S] cluster contacts are provided by cysteine 107, histidine 109, cysteine 125, and histidine 128. A disulfide bridge links cysteine 112 with cysteine 127.

The protein belongs to the Rieske iron-sulfur protein family. As to quaternary structure, the 4 large subunits of the cytochrome b6-f complex are cytochrome b6, subunit IV (17 kDa polypeptide, PetD), cytochrome f and the Rieske protein, while the 4 small subunits are PetG, PetL, PetM and PetN. The complex functions as a dimer. Requires [2Fe-2S] cluster as cofactor.

It is found in the cellular thylakoid membrane. The catalysed reaction is 2 oxidized [plastocyanin] + a plastoquinol + 2 H(+)(in) = 2 reduced [plastocyanin] + a plastoquinone + 4 H(+)(out). In terms of biological role, component of the cytochrome b6-f complex, which mediates electron transfer between photosystem II (PSII) and photosystem I (PSI), cyclic electron flow around PSI, and state transitions. In Prochlorococcus marinus (strain MIT 9215), this protein is Cytochrome b6-f complex iron-sulfur subunit.